We begin with the raw amino-acid sequence, 208 residues long: FMN-dependent NADH:quinone oxidoreductase (208 aa).

Residues serine 10, 16–18 (SVS), 94–97 (MYNF), and 138–141 (SRGG) each bind FMN.

This sequence belongs to the azoreductase type 1 family. As to quaternary structure, homodimer. The cofactor is FMN.

It carries out the reaction 2 a quinone + NADH + H(+) = 2 a 1,4-benzosemiquinone + NAD(+). It catalyses the reaction N,N-dimethyl-1,4-phenylenediamine + anthranilate + 2 NAD(+) = 2-(4-dimethylaminophenyl)diazenylbenzoate + 2 NADH + 2 H(+). Its function is as follows. Quinone reductase that provides resistance to thiol-specific stress caused by electrophilic quinones. Also exhibits azoreductase activity. Catalyzes the reductive cleavage of the azo bond in aromatic azo compounds to the corresponding amines. The protein is FMN-dependent NADH:quinone oxidoreductase of Hyphomonas neptunium (strain ATCC 15444).